The chain runs to 569 residues: Urease subunit alpha (569 aa).

The 439-residue stretch at 131 to 569 (GGIDAHIHFI…VPMAQRYFLF (439 aa)) folds into the Urease domain. Positions 136, 138, and 219 each coordinate Ni(2+). Position 219 is an N6-carboxylysine (lysine 219). Histidine 221 contacts substrate. Ni(2+) is bound by residues histidine 248 and histidine 274. Histidine 322 serves as the catalytic Proton donor. Aspartate 362 provides a ligand contact to Ni(2+).

It belongs to the metallo-dependent hydrolases superfamily. Urease alpha subunit family. Heterotrimer of UreA (gamma), UreB (beta) and UreC (alpha) subunits. Three heterotrimers associate to form the active enzyme. Requires Ni cation as cofactor. Carboxylation allows a single lysine to coordinate two nickel ions.

It is found in the cytoplasm. It carries out the reaction urea + 2 H2O + H(+) = hydrogencarbonate + 2 NH4(+). The protein operates within nitrogen metabolism; urea degradation; CO(2) and NH(3) from urea (urease route): step 1/1. The chain is Urease subunit alpha from Bacillus sp. (strain TB-90).